The sequence spans 323 residues: Olfactory receptor 2T35 (323 aa).

Residues 1–26 (MGMEGLLQNSTNFVLTGLITHPAFPG) lie on the Extracellular side of the membrane. The N-linked (GlcNAc...) asparagine glycan is linked to N9. The helical transmembrane segment at 27–50 (LLFAVVFSIFVVAITANLVMILLI) threads the bilayer. At 51-58 (HMDSRLHT) the chain is on the cytoplasmic side. Residues 59-80 (PMYFLLSQLSIMDTIYICITVP) traverse the membrane as a helical segment. Residues 81-101 (KMLQDLLSKDKTISFLGCAVQ) lie on the Extracellular side of the membrane. Cysteines 98 and 189 form a disulfide. Residues 102–120 (IFYLTLIGGEFFLLGLMAY) form a helical membrane-spanning segment. The Cytoplasmic portion of the chain corresponds to 121–139 (DRYVAVCNPLRYPLLMNRR). Residues 140-158 (VCLFMVVGSWVGGSLDGFM) traverse the membrane as a helical segment. Residues 159-195 (LTPVTMSFPFCRSREINHFFCEIPAVLKLSCTDTSLY) are Extracellular-facing. A helical membrane pass occupies residues 196–219 (ETLMYACCVLMLLIPLSVISVSYT). At 220-236 (HILLTVHRMNSAEGRRK) the chain is on the cytoplasmic side. Residues 237 to 259 (AFATCSSHIMVVSVFYGAAFYTN) traverse the membrane as a helical segment. Over 260-272 (VLPHSYHTPEKDK) the chain is Extracellular. The chain crosses the membrane as a helical span at residues 273–292 (VVSAFYTILTPMLNPLIYSL). The Cytoplasmic segment spans residues 293–323 (RNKDVAAALRKVLGRCGSSQSIRVATVIRKG).

The protein belongs to the G-protein coupled receptor 1 family.

The protein resides in the cell membrane. Functionally, odorant receptor. In Homo sapiens (Human), this protein is Olfactory receptor 2T35 (OR2T35).